The following is a 416-amino-acid chain: Serine hydroxymethyltransferase (416 aa).

(6S)-5,6,7,8-tetrahydrofolate-binding positions include leucine 118 and 122–124 (GHL). Lysine 226 is subject to N6-(pyridoxal phosphate)lysine. (6S)-5,6,7,8-tetrahydrofolate is bound by residues glutamate 242 and 350–352 (SPF).

This sequence belongs to the SHMT family. Homodimer. Pyridoxal 5'-phosphate serves as cofactor.

The protein localises to the cytoplasm. It carries out the reaction (6R)-5,10-methylene-5,6,7,8-tetrahydrofolate + glycine + H2O = (6S)-5,6,7,8-tetrahydrofolate + L-serine. Its pathway is one-carbon metabolism; tetrahydrofolate interconversion. It functions in the pathway amino-acid biosynthesis; glycine biosynthesis; glycine from L-serine: step 1/1. Catalyzes the reversible interconversion of serine and glycine with tetrahydrofolate (THF) serving as the one-carbon carrier. This reaction serves as the major source of one-carbon groups required for the biosynthesis of purines, thymidylate, methionine, and other important biomolecules. Also exhibits THF-independent aldolase activity toward beta-hydroxyamino acids, producing glycine and aldehydes, via a retro-aldol mechanism. The polypeptide is Serine hydroxymethyltransferase (Helicobacter pylori (strain ATCC 700392 / 26695) (Campylobacter pylori)).